Reading from the N-terminus, the 173-residue chain is Zinc resistance-associated protein homolog (173 aa).

A signal peptide spans 1 to 28 (MNSKRIALGIIALATVVSLGTAANNAFA).

The protein belongs to the ZraP family.

This is Zinc resistance-associated protein homolog from Nitratidesulfovibrio vulgaris (strain ATCC 29579 / DSM 644 / CCUG 34227 / NCIMB 8303 / VKM B-1760 / Hildenborough) (Desulfovibrio vulgaris).